The chain runs to 441 residues: Xaa-Pro dipeptidase (441 aa).

Aspartate 244, aspartate 255, histidine 336, glutamate 381, and glutamate 420 together coordinate Mn(2+).

Belongs to the peptidase M24B family. Bacterial-type prolidase subfamily. Mn(2+) is required as a cofactor.

The catalysed reaction is Xaa-L-Pro dipeptide + H2O = an L-alpha-amino acid + L-proline. Functionally, splits dipeptides with a prolyl residue in the C-terminal position. The sequence is that of Xaa-Pro dipeptidase from Xanthomonas euvesicatoria pv. vesicatoria (strain 85-10) (Xanthomonas campestris pv. vesicatoria).